A 288-amino-acid polypeptide reads, in one-letter code: Histone H3-like centromeric protein hcp-3 (288 aa).

Residues 96 to 194 are disordered; it reads YHARKEQARR…VTKTRRYRPG (99 aa). Over residues 178 to 193 the composition is skewed to basic residues; it reads MRAGRNRVTKTRRYRP. The tract at residues 191-288 is H3-like; it reads YRPGQKALEE…LYRRLCLRHL (98 aa).

The protein belongs to the histone H3 family. Forms a nucleosome-like histone octamer containing two molecules each of H2A, H2B, hcp-3 and H4 assembled in one hcp-3-H4 heterotetramer and two H2A-H2B heterodimers. The hcp-3-H4 heterotetramer is more compact and structurally more rigid than corresponding H3-H4 heterotetramers. Interacts with knl-2. Interacts with lin-53.

The protein localises to the nucleus. It localises to the chromosome. Its subcellular location is the centromere. It is found in the kinetochore. Functionally, histone H3-like variant which exclusively replaces conventional H3 in the nucleosome core of centromeric chromatin at the inner plate of the kinetochore. Required for recruitment and assembly of kinetochore proteins, mitotic progression and chromosome segregation. May serve as an epigenetic mark that propagates centromere identity through replication and cell division. Might promote cleavage furrow stability during cytokinesis. Not required for chromosome segregation during meiosis. The chain is Histone H3-like centromeric protein hcp-3 from Caenorhabditis elegans.